A 686-amino-acid chain; its full sequence is Rhophilin-2 (686 aa).

The REM-1 domain maps to 26-100 (NPLAQTGRSK…LEGLNISVGV (75 aa)). Residues 46–66 (QILKAMRMRTGAENLLKAATN) are interaction with Rho. Residues 111-460 (PLIPLGLKET…QLKYTQLRED (350 aa)) form the BRO1 domain. The 79-residue stretch at 515 to 593 (RSIHFTAEEG…DDIEMKVVSL (79 aa)) folds into the PDZ domain. The residue at position 655 (Thr-655) is a Phosphothreonine.

The protein belongs to the RHPN family. In terms of assembly, interacts with GTP-bound RhoA and RhoB. Interacts with both GTP- and GDP-bound RhoA. Interacts with KRT18.

It localises to the cytoplasm. The protein resides in the perinuclear region. In terms of biological role, binds specifically to GTP-Rho. May function in a Rho pathway to limit stress fiber formation and/or increase the turnover of F-actin structures in the absence of high levels of RhoA activity. This chain is Rhophilin-2 (RHPN2), found in Bos taurus (Bovine).